Here is a 512-residue protein sequence, read N- to C-terminus: Chitin synthase regulatory factor 2 (512 aa).

Sel1-like repeat units lie at residues 224–260 (SEAL…DLNH), 261–296 (VQAA…SGQH), 297–333 (VGAM…LEAD), 337–377 (PQAL…KYGL), 378–414 (KDAQ…RKRN), and 415–452 (PEAM…YKNH). C509 carries the cysteine methyl ester modification. C509 is lipidated: S-farnesyl cysteine. A propeptide spans 510–512 (IIS) (removed in mature form).

Its subcellular location is the membrane. Functionally, involved in chitin biosynthesis. This Schizosaccharomyces pombe (strain 972 / ATCC 24843) (Fission yeast) protein is Chitin synthase regulatory factor 2 (chr2).